Here is a 100-residue protein sequence, read N- to C-terminus: Small ribosomal subunit protein uS14c (100 aa).

This sequence belongs to the universal ribosomal protein uS14 family. Part of the 30S ribosomal subunit.

The protein localises to the plastid. It is found in the chloroplast. Functionally, binds 16S rRNA, required for the assembly of 30S particles. The sequence is that of Small ribosomal subunit protein uS14c from Stigeoclonium helveticum (Green alga).